A 398-amino-acid chain; its full sequence is 4-hydroxy-3-methylbut-2-en-1-yl diphosphate synthase (ferredoxin) (398 aa).

The [4Fe-4S] cluster site is built by C306, C309, C340, and E347.

It belongs to the IspG family. The cofactor is [4Fe-4S] cluster.

The enzyme catalyses (2E)-4-hydroxy-3-methylbut-2-enyl diphosphate + 2 oxidized [2Fe-2S]-[ferredoxin] + H2O = 2-C-methyl-D-erythritol 2,4-cyclic diphosphate + 2 reduced [2Fe-2S]-[ferredoxin] + H(+). Its pathway is isoprenoid biosynthesis; isopentenyl diphosphate biosynthesis via DXP pathway; isopentenyl diphosphate from 1-deoxy-D-xylulose 5-phosphate: step 5/6. Functionally, converts 2C-methyl-D-erythritol 2,4-cyclodiphosphate (ME-2,4cPP) into 1-hydroxy-2-methyl-2-(E)-butenyl 4-diphosphate. The protein is 4-hydroxy-3-methylbut-2-en-1-yl diphosphate synthase (ferredoxin) of Parasynechococcus marenigrum (strain WH8102).